We begin with the raw amino-acid sequence, 1896 residues long: von Willebrand factor A domain-containing protein 8 (1896 aa).

The transit peptide at 1 to 18 (MHSRILFKGTAAAVAARR) directs the protein to the mitochondrion. Position 439-446 (439-446 (GAKGCGKS)) interacts with ATP. The interval 1536–1564 (GLDVSSPKHGKIDAKNAPHVGGNQWAGGT) is disordered. Residues 1705–1887 (RLRVLADVSG…KEIPQILQQI (183 aa)) form the VWFA domain.

Monomer.

The protein resides in the mitochondrion. Its function is as follows. Exhibits ATPase activity in vitro. This Danio rerio (Zebrafish) protein is von Willebrand factor A domain-containing protein 8 (vwa8).